A 425-amino-acid chain; its full sequence is MPPRLRPGSVCSRCHFHRRSLSSTAFLAQKQAERPPPPPEAGHVRLVNRALISLTGADSTSFLQGLITQNVVSAKSRASPTTPFYAGFLNAQGRLLHDTFIYPTLPEENGGNEGMELGYLIEVDKEQVTNLLKHLKKHKLRAKLKFRALDEGERGVWAVWDNAKNWETKDTGDVLREVITCADNRAPAFGYRVLLAGDNLQNLSQPLPGQQASLSTYTLRRILHGIPEGQDELGRESALPMDSNMDIMGGIDFHKGCYLGQELTIRTHHRGVVRKRVLPVQLYNTEDPKPMPSSSGIPVYSPDSQLLLPSAGANITKSSASGKGRSAGKFISRIGNVGLALCRLETMTDISLTGESSQYNPSEEFKISWEANADAGVAEAGEVKVTAFIPPWVKDYILHGGTRQRQTKEDVHRAKSGTEQIEEED.

The N-terminal 28 residues, 1-28, are a transit peptide targeting the mitochondrion; sequence MPPRLRPGSVCSRCHFHRRSLSSTAFLA. The interval 403–425 is disordered; that stretch reads RQRQTKEDVHRAKSGTEQIEEED.

The protein belongs to the GcvT family. CAF17/IBA57 subfamily.

The protein localises to the mitochondrion matrix. The protein is Iron-sulfur cluster assembly factor IBA57 homolog, mitochondrial (CAF17) of Coccidioides immitis (strain RS) (Valley fever fungus).